We begin with the raw amino-acid sequence, 233 residues long: MHLPESLHDLADNETVRFLRRPKSISRIFGGVFSLVIFSSLLTDGYQNRTESPQLRCVLNSNHMACSFAVGAGFLSFLSCLVFLAIDAYERRLVGTRFKIAFQLLDFILAVLWAGVWFVAFCFLASQWQHSKSKHFLLGNSSAKAAIALSFFSVPVWILQAYLAFQDLRDEAPVPYKRSLEEGSVVLNTLSPSSTSPSNPPITGPNSLSYTSSALSPYMTTPKAPRLAMMPDS.

One can recognise an MARVEL domain in the interval 18 to 169 (FLRRPKSISR…QAYLAFQDLR (152 aa)). The next 4 helical transmembrane spans lie at 25–45 (ISRI…LTDG), 66–86 (CSFA…FLAI), 104–124 (LLDF…FCFL), and 145–165 (AAIA…YLAF). A disordered region spans residues 191-233 (SPSSTSPSNPPITGPNSLSYTSSALSPYMTTPKAPRLAMMPDS). Over residues 204–219 (GPNSLSYTSSALSPYM) the composition is skewed to polar residues.

It belongs to the synaptogyrin family.

The protein resides in the membrane. This chain is Synaptogyrin-4 (Syngr4), found in Mus musculus (Mouse).